A 195-amino-acid chain; its full sequence is Probable GTP-binding protein EngB (195 aa).

Residues 24–195 (GLTEVALSGR…EIWNFIETYI (172 aa)) form the EngB-type G domain. GTP is bound by residues 32–39 (GRSNVGKS), 59–63 (GKTQT), 77–80 (DVPG), 144–147 (TKED), and 176–178 (YSS). Mg(2+) contacts are provided by Ser-39 and Thr-61.

The protein belongs to the TRAFAC class TrmE-Era-EngA-EngB-Septin-like GTPase superfamily. EngB GTPase family. Mg(2+) serves as cofactor.

Necessary for normal cell division and for the maintenance of normal septation. The chain is Probable GTP-binding protein EngB from Staphylococcus epidermidis (strain ATCC 35984 / DSM 28319 / BCRC 17069 / CCUG 31568 / BM 3577 / RP62A).